The following is a 582-amino-acid chain: Protein LYRIC (582 aa).

The Lumenal segment spans residues 1–48 (MAARSWQDELAQQAEEGSARLREMLSVGLGFLRTELGLDLGLEPKRYP). An activation of NF-kappa-B region spans residues 1–71 (MAARSWQDEL…LLLFLLGYGW (71 aa)). Residues 49–69 (GWVILVGTGALGLLLLFLLGY) form a helical membrane-spanning segment. Over 70-582 (GWAAACAGAR…KKKKKARRET (513 aa)) the chain is Cytoplasmic. Positions 72 to 169 (AAACAGARKK…EKSKKNKKKS (98 aa)) are interaction with BCCIP. Residues 78 to 222 (ARKKRRSPPR…DSGSLDSTIP (145 aa)) are disordered. Over residues 93 to 106 (AAVPAAAPDDLALL) the composition is skewed to low complexity. The segment at 101 to 205 (DDLALLKNLR…ISHREKRQQR (105 aa)) is interaction with RELA. The span at 109 to 127 (LRSEEQKKKNRKKLSEKPK) shows a compositional bias: basic and acidic residues. At Thr143 the chain carries Phosphothreonine. The span at 160 to 169 (EKSKKNKKKS) shows a compositional bias: basic residues. Ser180 carries the post-translational modification Phosphoserine. Residues 198–208 (HREKRQQRKRD) are compositionally biased toward basic residues. Residues Ser216 and Ser251 each carry the phosphoserine modification. Lys264 bears the N6-acetyllysine mark. Residues 280 to 582 (TVNGGGWNEK…KKKKKARRET (303 aa)) are disordered. Phosphoserine is present on residues Ser298, Ser306, Ser308, Ser311, Ser323, Ser339, Ser344, and Ser369. Polar residues predominate over residues 320–333 (SAWSQDTGDANTNG). 2 stretches are compositionally biased toward polar residues: residues 354–372 (EPVS…SRNQ) and 383–394 (NGLSSADPNSDW). A lung-homing for mammary tumors region spans residues 381 to 443 (GLNGLSSADP…EGALPTGKSK (63 aa)). Phosphoserine occurs at positions 415 and 426. The span at 421 to 434 (DDQKVSDDDKEKGE) shows a compositional bias: basic and acidic residues. The segment covering 441–451 (KSKKKKKKKKK) has biased composition (basic residues). Ser457 bears the Phosphoserine mark. Thr458 carries the post-translational modification Phosphothreonine. A phosphoserine mark is found at Ser478, Ser494, and Ser496. 2 stretches are compositionally biased toward polar residues: residues 504-520 (KNSQ…STEP) and 549-568 (NTKQ…SWES). Ser568 bears the Phosphoserine mark. Residues 571 to 582 (QIKKKKKARRET) show a composition bias toward basic residues.

As to quaternary structure, interacts with BCCIP, CREBBP/CBP and RELA/p65. Widely expressed with highest levels in muscle-dominating organs such as skeletal muscle, heart, tongue and small intestine and in endocrine glands such as thyroid and adrenal gland. Overexpressed in various cancers including breast, brain, prostate, melanoma and glioblastoma multiforme.

It localises to the endoplasmic reticulum membrane. The protein localises to the nucleus membrane. The protein resides in the cell junction. It is found in the tight junction. Its subcellular location is the nucleus. It localises to the nucleolus. The protein localises to the cytoplasm. The protein resides in the perinuclear region. In terms of biological role, down-regulates SLC1A2/EAAT2 promoter activity when expressed ectopically. Activates the nuclear factor kappa-B (NF-kappa-B) transcription factor. Promotes anchorage-independent growth of immortalized melanocytes and astrocytes which is a key component in tumor cell expansion. Promotes lung metastasis and also has an effect on bone and brain metastasis, possibly by enhancing the seeding of tumor cells to the target organ endothelium. Induces chemoresistance. This is Protein LYRIC (MTDH) from Homo sapiens (Human).